The primary structure comprises 495 residues: Sulfhydryl oxidase 2 (495 aa).

Residues 1–15 (MSLVHLLLFAGLVIA) form the signal peptide. The 136-residue stretch at 29 to 164 (EISDQKDKAV…LLNWINKQIG (136 aa)) folds into the Thioredoxin domain. N41 carries an N-linked (GlcNAc...) asparagine glycan. Active-site nucleophile residues include C66 and C69. Residues C66 and C69 are joined by a disulfide bond. N-linked (GlcNAc...) asparagine glycans are attached at residues N182, N257, N266, and N292. C287 and C299 are joined by a disulfide. The ERV/ALR sulfhydryl oxidase domain occupies 290 to 392 (SKNDTRGFSC…GDPKFPKIIW (103 aa)). FAD contacts are provided by residues R295, W302, H306, E336, H340, 363-370 (WSTHNKVN), K389, and W392. C334 and C337 are joined by a disulfide. The cysteines at positions 398 and 401 are disulfide-linked.

Requires FAD as cofactor.

The protein resides in the secreted. It carries out the reaction 2 R'C(R)SH + O2 = R'C(R)S-S(R)CR' + H2O2. Catalyzes the oxidation of sulfhydryl groups in peptide and protein thiols to disulfides with the reduction of oxygen to hydrogen peroxide. May contribute to disulfide bond formation in a variety of secreted proteins. The protein is Sulfhydryl oxidase 2 (QSOX2) of Arabidopsis thaliana (Mouse-ear cress).